The primary structure comprises 289 residues: 4-diphosphocytidyl-2-C-methyl-D-erythritol kinase (289 aa).

K10 is an active-site residue. An ATP-binding site is contributed by 94-104 (PVAAGLAGGSS). D136 is an active-site residue.

Belongs to the GHMP kinase family. IspE subfamily.

It carries out the reaction 4-CDP-2-C-methyl-D-erythritol + ATP = 4-CDP-2-C-methyl-D-erythritol 2-phosphate + ADP + H(+). It functions in the pathway isoprenoid biosynthesis; isopentenyl diphosphate biosynthesis via DXP pathway; isopentenyl diphosphate from 1-deoxy-D-xylulose 5-phosphate: step 3/6. In terms of biological role, catalyzes the phosphorylation of the position 2 hydroxy group of 4-diphosphocytidyl-2C-methyl-D-erythritol. The polypeptide is 4-diphosphocytidyl-2-C-methyl-D-erythritol kinase (Bacillus anthracis).